The following is a 64-amino-acid chain: Small ribosomal subunit protein bS21 (64 aa).

Residues 40–64 (PPSVKRKIKSQEAQRRMRRTKRKRF) form a disordered region. The segment covering 55–64 (RMRRTKRKRF) has biased composition (basic residues).

It belongs to the bacterial ribosomal protein bS21 family.

The polypeptide is Small ribosomal subunit protein bS21 (Elusimicrobium minutum (strain Pei191)).